We begin with the raw amino-acid sequence, 252 residues long: Triosephosphate isomerase (252 aa).

11–13 (NWK) contributes to the substrate binding site. The active-site Electrophile is His-97. The Proton acceptor role is filled by Glu-169. Substrate is bound by residues Gly-175, Ser-215, and 236–237 (GG).

The protein belongs to the triosephosphate isomerase family. As to quaternary structure, homodimer.

It localises to the cytoplasm. It carries out the reaction D-glyceraldehyde 3-phosphate = dihydroxyacetone phosphate. The protein operates within carbohydrate biosynthesis; gluconeogenesis. Its pathway is carbohydrate degradation; glycolysis; D-glyceraldehyde 3-phosphate from glycerone phosphate: step 1/1. Its function is as follows. Involved in the gluconeogenesis. Catalyzes stereospecifically the conversion of dihydroxyacetone phosphate (DHAP) to D-glyceraldehyde-3-phosphate (G3P). The chain is Triosephosphate isomerase from Mycoplasmoides gallisepticum (strain R(low / passage 15 / clone 2)) (Mycoplasma gallisepticum).